Here is a 606-residue protein sequence, read N- to C-terminus: Leucine-rich repeat and immunoglobulin-like domain-containing nogo receptor-interacting protein 2 (606 aa).

The signal sequence occupies residues Met1–Gly27. An LRRNT domain is found at Cys28–Ile57. Topologically, residues Cys28 to Thr545 are extracellular. Residue Asn38 is glycosylated (N-linked (GlcNAc...) asparagine). LRR repeat units lie at residues Glu58–Ser79, Leu82–Asn103, Asn106–Gly127, Asn130–Asp151, Asn154–Gly175, Ser178–His199, Ser202–Arg223, His226–Tyr247, Asn250–His271, Tyr274–Asp295, Arg298–Gly319, and Phe322–Ser343. The N-linked (GlcNAc...) asparagine glycan is linked to Asn130. An N-linked (GlcNAc...) asparagine glycan is attached at Asn188. Asn250, Asn260, and Asn279 each carry an N-linked (GlcNAc...) asparagine glycan. An N-linked (GlcNAc...) asparagine glycan is attached at Asn327. Positions Asn355–Lys409 constitute an LRRCT domain. Cysteines 432 and 483 form a disulfide. N-linked (GlcNAc...) asparagine glycosylation is found at Asn491, Asn522, and Asn527. A helical membrane pass occupies residues Ala546 to Trp566. The Cytoplasmic segment spans residues Ser567 to Ile606.

It localises to the membrane. This chain is Leucine-rich repeat and immunoglobulin-like domain-containing nogo receptor-interacting protein 2 (Lingo2), found in Mus musculus (Mouse).